A 298-amino-acid chain; its full sequence is ATP phosphoribosyltransferase (298 aa).

It belongs to the ATP phosphoribosyltransferase family. Long subfamily. Mg(2+) is required as a cofactor.

The protein localises to the cytoplasm. The catalysed reaction is 1-(5-phospho-beta-D-ribosyl)-ATP + diphosphate = 5-phospho-alpha-D-ribose 1-diphosphate + ATP. Its pathway is amino-acid biosynthesis; L-histidine biosynthesis; L-histidine from 5-phospho-alpha-D-ribose 1-diphosphate: step 1/9. With respect to regulation, feedback inhibited by histidine. Functionally, catalyzes the condensation of ATP and 5-phosphoribose 1-diphosphate to form N'-(5'-phosphoribosyl)-ATP (PR-ATP). Has a crucial role in the pathway because the rate of histidine biosynthesis seems to be controlled primarily by regulation of HisG enzymatic activity. In Vibrio campbellii (strain ATCC BAA-1116), this protein is ATP phosphoribosyltransferase.